Reading from the N-terminus, the 572-residue chain is Phenylalanine--tRNA ligase beta subunit (572 aa).

The B5 domain occupies 278 to 353; sequence LTPKEFEVEF…IAYGYNEIKP (76 aa). Residues aspartate 331, aspartate 337, glutamate 340, and aspartate 341 each contribute to the Mg(2+) site.

It belongs to the phenylalanyl-tRNA synthetase beta subunit family. Type 2 subfamily. Tetramer of two alpha and two beta subunits. Mg(2+) is required as a cofactor.

It is found in the cytoplasm. It catalyses the reaction tRNA(Phe) + L-phenylalanine + ATP = L-phenylalanyl-tRNA(Phe) + AMP + diphosphate + H(+). This Thermococcus onnurineus (strain NA1) protein is Phenylalanine--tRNA ligase beta subunit.